The following is a 275-amino-acid chain: Autophagy protein 5 (275 aa).

M1 is modified (N-acetylmethionine). K130 participates in a covalent cross-link: Glycyl lysine isopeptide (Lys-Gly) (interchain with G-Cter in ATG12).

It belongs to the ATG5 family. As to quaternary structure, forms a conjugate with ATG12. Part of the minor complex composed of 4 sets of ATG12-ATG5 and ATG16L1 (400 kDa); this complex interacts with ATG3 leading to disruption of ATG7 interaction and promotion of ATG8-like proteins lipidation. Forms an 800-kDa complex composed of ATG12-ATG5 and ATG16L2. The ATG12-ATG5 conjugate interacts with RAB33A; this interaction is bridged by ATG16L1 and promotes ATG12-ATG5-ATG16L1 complex recruitment to phagophores. Interacts with TECPR1; the interaction is direct and does not take place when ATG16L1 is associated with the ATG5-ATG12 conjugate. Interacts with DHX58/RIG-1, IFIH1/MDA5 and MAVS/IPS-1 in monomeric form as well as in ATG12-ATG5 conjugate form. The interaction with MAVS is further enhanced upon vesicular stomatitis virus (VSV) infection. Interacts with ATG3. Interacts with ATG7 and ATG10. Interacts with FADD. Interacts with Bassoon/BSN; this interaction is important for the regulation of presynaptic autophagy. Interacts with ATG16L2. Conjugated to ATG12; which is essential for autophagy, but is not required for association with isolation membrane. In terms of processing, acetylated by EP300.

Its subcellular location is the cytoplasm. The protein resides in the preautophagosomal structure membrane. In terms of biological role, involved in autophagic vesicle formation. Conjugation with ATG12, through a ubiquitin-like conjugating system involving ATG7 as an E1-like activating enzyme and ATG10 as an E2-like conjugating enzyme, is essential for its function. The ATG12-ATG5 conjugate acts as an E3-like enzyme which is required for lipidation of ATG8 family proteins and their association to the vesicle membranes. Involved in mitochondrial quality control after oxidative damage, and in subsequent cellular longevity. Plays a critical role in multiple aspects of lymphocyte development and is essential for both B and T lymphocyte survival and proliferation. Required for optimal processing and presentation of antigens for MHC II. Involved in the maintenance of axon morphology and membrane structures, as well as in normal adipocyte differentiation. Promotes primary ciliogenesis through removal of OFD1 from centriolar satellites and degradation of IFT20 via the autophagic pathway. As part of the ATG8 conjugation system with ATG12 and ATG16L1, required for recruitment of LRRK2 to stressed lysosomes and induction of LRRK2 kinase activity in response to lysosomal stress. May play an important role in the apoptotic process, possibly within the modified cytoskeleton. Its expression is a relatively late event in the apoptotic process, occurring downstream of caspase activity. Plays a crucial role in IFN-gamma-induced autophagic cell death by interacting with FADD. The protein is Autophagy protein 5 of Sus scrofa (Pig).